Here is a 115-residue protein sequence, read N- to C-terminus: uncharacterized protein (115 aa).

This is an uncharacterized protein from Dictyostelium discoideum (Social amoeba).